The primary structure comprises 402 residues: tRNA(Met) cytidine acetate ligase (402 aa).

Residues 7–20 (IAEYNPMHNGHIHH), glycine 102, asparagine 171, and arginine 196 contribute to the ATP site.

Belongs to the TmcAL family.

It is found in the cytoplasm. The enzyme catalyses cytidine(34) in elongator tRNA(Met) + acetate + ATP = N(4)-acetylcytidine(34) in elongator tRNA(Met) + AMP + diphosphate. Its function is as follows. Catalyzes the formation of N(4)-acetylcytidine (ac(4)C) at the wobble position of elongator tRNA(Met), using acetate and ATP as substrates. First activates an acetate ion to form acetyladenylate (Ac-AMP) and then transfers the acetyl group to tRNA to form ac(4)C34. This chain is tRNA(Met) cytidine acetate ligase, found in Clostridium acetobutylicum (strain ATCC 824 / DSM 792 / JCM 1419 / IAM 19013 / LMG 5710 / NBRC 13948 / NRRL B-527 / VKM B-1787 / 2291 / W).